Consider the following 787-residue polypeptide: MRTRRPGQLWATLLALGALAGVVVGESNICTTRGVNSCQQCLAVSPVCAWCSDESLPQNSPRCNLKKNLLKDKCSPESIEFPVSEAQILEALPLSSKGSGDSAQITQVSPQRIALRLRPDDSKIFSLQVRQVEDYPVDIYYLMDLSFSMKDDLSSIQTLGTKLASQMRKLTSNLRIGFGAFVDKPVSPYMFISPPQAIKNPCYTMKSTCLPMFGYKHVLTLTDQVTRFNDEVKKQSVSRNRDAPEGGFDAIMQATVCDEKIGWRNDASHLLVFTTDAKTHIALDGRLAGIVLPNDGRCHIGPDNHYSASTTMDYPSLGLMTEKLSQKNINLIFAVTENVVSLYQNYSELIPGTTVGVLSDDSSNVLQLIVDAYGKIRSKVELEVRDLPEELSLSFNATCLNNEVIPGLKSCVGLKIGDTVSFSIEAKVRGCPQQKEQSFTIKPVGFKDSLTVQVTFDCDCDCQAFAQPLSPRCNNGNGTFECGVCRCDQGWLGSMCECSEEDYRPSQQEECSPKEGQPICSQRGECLCGQCVCHSSDFGKITGKYCECDDFSCVRYKGEMCSGHGQCNCGDCVCDSDWTGYYCNCTTRTDTCMSTNGLLCSGRGNCECGSCVCVQPGSYGDTCEKCPTCPDACSFKKDCVECKKFNRGKLHEENNCNRFCRDDIELVKELTDTGKNAVNCTYKNEDDCVVRFQYYEDSSGRAVLYVVEEPECPKGPDILVVLLSVMGAILLIGLATLLIWKLLITIHDRKEFAKFEEERARAKWDTANNPLYKEATSTFTNITYRGT.

A signal peptide spans 1-25 (MRTRRPGQLWATLLALGALAGVVVG). Over 27-717 (SNICTTRGVN…EEPECPKGPD (691 aa)) the chain is Extracellular. One can recognise a PSI domain in the interval 29–75 (ICTTRGVNSCQQCLAVSPVCAWCSDESLPQNSPRCNLKKNLLKDKCS). 19 disulfides stabilise this stretch: Cys30–Cys48, Cys38–Cys460, Cys41–Cys63, Cys51–Cys74, Cys202–Cys209, Cys257–Cys298, Cys399–Cys411, Cys431–Cys458, Cys462–Cys482, Cys473–Cys485, Cys487–Cys496, Cys498–Cys528, Cys511–Cys526, Cys520–Cys531, Cys533–Cys546, Cys548–Cys569, Cys553–Cys567, Cys561–Cys572, and Cys574–Cys583. The VWFA domain occupies 134-376 (DYPVDIYYLM…QLIVDAYGKI (243 aa)). Mg(2+) is bound by residues Ser146 and Ser148. Ca(2+)-binding residues include Ser148, Asp151, Asp152, and Asp183. Residues 202–209 (CYTMKSTC) form a CX3CL1-binding region. Residues 202 to 209 (CYTMKSTC) form an involved in CX3CL1-, NRG1-, FGF1- and IGF1-binding region. Positions 240, 242, 244, 245, and 276 each coordinate Ca(2+). Position 245 (Glu245) interacts with Mg(2+). Residues 292-312 (LPNDGRCHIGPDNHYSASTTM) form a CX3CL1-binding region. Residues Asn345 and Asn396 are each glycosylated (N-linked (GlcNAc...) asparagine). I-EGF domains follow at residues 462–497 (CQAF…SMCE), 498–547 (CSEE…KYCE), 548–584 (CDDF…YYCN), and 585–624 (CTTR…DTCE). Residue Asn477 is glycosylated (N-linked (GlcNAc...) asparagine). N-linked (GlcNAc...) asparagine glycosylation is present at Asn584. 9 cysteine pairs are disulfide-bonded: Cys585–Cys608, Cys592–Cys606, Cys600–Cys611, Cys613–Cys623, Cys626–Cys629, Cys633–Cys680, Cys639–Cys660, Cys642–Cys656, and Cys688–Cys712. An N-linked (GlcNAc...) asparagine glycan is attached at Asn679. Residues 718-738 (ILVVLLSVMGAILLIGLATLL) traverse the membrane as a helical segment. The Cytoplasmic segment spans residues 739–787 (IWKLLITIHDRKEFAKFEEERARAKWDTANNPLYKEATSTFTNITYRGT). Position 766 is a phosphothreonine (Thr766). At Tyr772 the chain carries Phosphotyrosine. The LIR signature appears at 776-782 (TSTFTNI). Position 778 is a phosphothreonine (Thr778). Phosphotyrosine is present on Tyr784.

Belongs to the integrin beta chain family. In terms of assembly, heterodimer of an alpha and a beta subunit. Beta-3 (ITGB3) associates with either alpha-IIB (ITGA2B) or alpha-V (ITGAV). Interacts with FLNB and COMP. Interacts with PDIA6 following platelet stimulation. Interacts with SYK; upon activation by ITGB3 promotes platelet adhesion. Interacts with MYO10. Interacts with DAB2. Interacts with FERMT2. Integrin ITGAV:ITGB3 interacts with FBLN5 (via N-terminus). Interacts with EMP2; regulates the levels of the heterodimer ITGA5:ITGB3 integrin expression on the plasma membrane. ITGAV:ITGB3 interacts with CCN3. ITGAV:ITGB3 and ITGA2B:ITGB3 interact with SELP (via C-type lectin domain); the interaction mediates cell-cell interaction and adhesion. ITGAV:ITGB3 interacts with AGRA2. ITGAV:ITGB3 is found in a ternary complex with CX3CR1 and CX3CL1. ITGAV:ITGB3 is found in a ternary complex with NRG1 and ERBB3. ITGAV:ITGB3 is found in a ternary complex with FGF1 and FGFR1. ITGAV:ITGB3 interacts with FGF2; it is likely that FGF2 can simultaneously bind ITGAV:ITGB3 and FGF receptors. ITGAV:ITGB3 binds to IL1B. ITGAV:ITGB3 is found in a ternary complex with IGF1 and IGF1R. ITGAV:ITGB3 interacts with IGF2. ITGAV:ITGB3 interacts with FBN1. ITGAV:ITGB3 interacts with CD9, CD81 and CD151 (via second extracellular domain). Interacts (via the allosteric site (site 2)) with CXCL12 in a CXCR4-independent manner. Interacts with MXRA8/DICAM; the interaction inhibits ITGAV:ITGB3 heterodimer formation. ITGAV:ITGB3 interacts with PTN. Forms a complex with PTPRZ1 and PTN that stimulates endothelial cell migration through ITGB3 Tyr-772 phosphorylation. ITGAV:ITGB3 interacts with SLC6A4. Interacts with SLC6A4 (via C-terminus); this interaction regulates SLC6A4 trafficking. ITGA2B:ITGB3 interacts with PPIA/CYPA; the interaction is ROS and PPIase activity-dependent and is increased in the presence of thrombin. Interacts with tensin TNS3; TNS3 also interacts with PEAK1, thus acting as an adapter molecule to bridge the association of PEAK1 with ITGB3. Interacts with TM4SF19. Phosphorylated on tyrosine residues in response to thrombin-induced platelet aggregation. Probably involved in outside-in signaling.

It localises to the cell membrane. The protein resides in the cell projection. The protein localises to the lamellipodium membrane. Its subcellular location is the cell junction. It is found in the focal adhesion. It localises to the postsynaptic cell membrane. The protein resides in the synapse. Integrin alpha-V/beta-3 (ITGAV:ITGB3) is a receptor for cytotactin, fibronectin, laminin, matrix metalloproteinase-2, osteopontin, osteomodulin, prothrombin, thrombospondin, vitronectin and von Willebrand factor. Integrin alpha-IIB/beta-3 (ITGA2B:ITGB3) is a receptor for fibronectin, fibrinogen, plasminogen, prothrombin, thrombospondin and vitronectin. Integrins alpha-IIB/beta-3 and alpha-V/beta-3 recognize the sequence R-G-D in a wide array of ligands. Integrin alpha-IIB/beta-3 recognizes the sequence H-H-L-G-G-G-A-K-Q-A-G-D-V in fibrinogen gamma chain. Following activation integrin alpha-IIB/beta-3 brings about platelet/platelet interaction through binding of soluble fibrinogen. This step leads to rapid platelet aggregation which physically plugs ruptured endothelial surfaces. Fibrinogen binding enhances SELP expression in activated platelets. ITGAV:ITGB3 binds to fractalkine (CX3CL1) and acts as its coreceptor in CX3CR1-dependent fractalkine signaling. ITGAV:ITGB3 binds to NRG1 (via EGF domain) and this binding is essential for NRG1-ERBB signaling. ITGAV:ITGB3 binds to FGF1 and this binding is essential for FGF1 signaling. ITGAV:ITGB3 binds to FGF2 and this binding is essential for FGF2 signaling. ITGAV:ITGB3 binds to IGF1 and this binding is essential for IGF1 signaling. ITGAV:ITGB3 binds to IGF2 and this binding is essential for IGF2 signaling. ITGAV:ITGB3 binds to IL1B and this binding is essential for IL1B signaling. ITGAV:ITGB3 binds to PLA2G2A via a site (site 2) which is distinct from the classical ligand-binding site (site 1) and this induces integrin conformational changes and enhanced ligand binding to site 1. ITGAV:ITGB3 acts as a receptor for fibrillin-1 (FBN1) and mediates R-G-D-dependent cell adhesion to FBN1. In brain, plays a role in synaptic transmission and plasticity. Involved in the regulation of the serotonin neurotransmission, is required to localize to specific compartments within the synapse the serotonin receptor SLC6A4 and for an appropriate reuptake of serotonin. Controls excitatory synaptic strength by regulating GRIA2-containing AMPAR endocytosis, which affects AMPAR abundance and composition. ITGAV:ITGB3 acts as a receptor for CD40LG. ITGAV:ITGB3 acts as a receptor for IBSP and promotes cell adhesion and migration to IBSP. The chain is Integrin beta-3 from Rattus norvegicus (Rat).